Consider the following 384-residue polypeptide: Mannitol-1-phosphate 5-dehydrogenase (384 aa).

NAD(+) is bound at residue 3 to 14 (AVHFGAGNIGRG).

This sequence belongs to the mannitol dehydrogenase family.

It carries out the reaction D-mannitol 1-phosphate + NAD(+) = beta-D-fructose 6-phosphate + NADH + H(+). The polypeptide is Mannitol-1-phosphate 5-dehydrogenase (Arthrobacter sp. (strain FB24)).